A 303-amino-acid chain; its full sequence is MQADKVKVAILGSGNIGTDLMYKLLRQPGPMELALVAGIDPASEGLARARQLGIPTSASGIEAILADPEIRIVFDATSAKAHVRHARLLREHGRIAIDLTPAARGPYVVPPVNLGMHLDAPNVNLITCGGQATIPLVYAVSRVTPVRYAEMVSTVSSRSAGPGTRQNIDEFTFTTARGLEVIGGAHQAKAIIILNPANPPILMRNTIYVLPEGEFDETAVQNSVAQMVADVQQYVPGYRLKNRPVIERRATPWGERPVLIMLLEVEGAGDFLPRYAGNLDIMTSAARRVGEVFAQHILKEVAA.

NAD(+) is bound at residue 13–16 (SGNI). Cys128 (acyl-thioester intermediate) is an active-site residue. Residues 159 to 167 (SAGPGTRQN) and Asn278 contribute to the NAD(+) site.

It belongs to the acetaldehyde dehydrogenase family.

The enzyme catalyses acetaldehyde + NAD(+) + CoA = acetyl-CoA + NADH + H(+). This Chloroflexus aggregans (strain MD-66 / DSM 9485) protein is Acetaldehyde dehydrogenase.